The sequence spans 881 residues: Alanine--tRNA ligase (881 aa).

Over residues 422 to 440 (FEDEMQKQKERARSARSTE) the composition is skewed to basic and acidic residues. The interval 422–445 (FEDEMQKQKERARSARSTEKSMGV) is disordered. 4 residues coordinate Zn(2+): H567, H571, C669, and H673.

This sequence belongs to the class-II aminoacyl-tRNA synthetase family. The cofactor is Zn(2+).

The protein localises to the cytoplasm. It catalyses the reaction tRNA(Ala) + L-alanine + ATP = L-alanyl-tRNA(Ala) + AMP + diphosphate. Catalyzes the attachment of alanine to tRNA(Ala) in a two-step reaction: alanine is first activated by ATP to form Ala-AMP and then transferred to the acceptor end of tRNA(Ala). Also edits incorrectly charged Ser-tRNA(Ala) and Gly-tRNA(Ala) via its editing domain. This Pediococcus pentosaceus (strain ATCC 25745 / CCUG 21536 / LMG 10740 / 183-1w) protein is Alanine--tRNA ligase.